We begin with the raw amino-acid sequence, 647 residues long: Probable inactive receptor kinase RLK902 (647 aa).

Positions 1 to 29 are cleaved as a signal peptide; it reads MRLFFTPSMSNLSIFFSILLLSLPLPSIG. LRR repeat units lie at residues 69-93, 94-118, 119-142, 144-165, and 166-192; these read GGRV…IFGN, LTQL…LGSC, SDLR…LFSL, NLVR…GFKN, and LTRL…SLDQ. The chain crosses the membrane as a helical span at residues 268–288; that stretch reads GIVIGCVVGLSLIVMILMVLF. Residues 365-639 form the Protein kinase domain; that stretch reads RASAEVLGKG…EVVRRIQELR (275 aa). Ser-367 bears the Phosphoserine mark. 371–379 serves as a coordination point for ATP; sequence LGKGTFGTA. A Phosphothreonine modification is found at Thr-388. An ATP-binding site is contributed by Lys-393. The residue at position 444 (Ser-444) is a Phosphoserine. Thr-520 carries the phosphothreonine modification. Residue Ser-540 is modified to Phosphoserine. Thr-618 bears the Phosphothreonine mark.

This sequence belongs to the protein kinase superfamily. Ser/Thr protein kinase family. Interacts with At3g17950, At3g27210 and At5g05190. Post-translationally, autophosphorylation. In terms of tissue distribution, expressed in root tips, lateral root primordia, stipules, and floral organ abscission zones.

The protein localises to the cell membrane. The sequence is that of Probable inactive receptor kinase RLK902 (RLK902) from Arabidopsis thaliana (Mouse-ear cress).